The following is a 386-amino-acid chain: DNA methyltransferase CcrM (386 aa).

Residues Leu280–Ala382 form the RAMA domain.

The protein belongs to the N(4)/N(6)-methyltransferase family.

It carries out the reaction a 2'-deoxyadenosine in DNA + S-adenosyl-L-methionine = an N(6)-methyl-2'-deoxyadenosine in DNA + S-adenosyl-L-homocysteine + H(+). A beta subtype methylase that recognizes the double-stranded sequence 5'-GANTC-3' and methylates A-2 on both strands. CcrM-mediated methylation has important cellular functions. Contributes to the accurate cell-cycle control of DNA replication and cellular morphology. The protein is DNA methyltransferase CcrM (ccrM) of Brucella abortus (strain S19).